The primary structure comprises 84 residues: Large ribosomal subunit protein bL27 (84 aa).

The interval 1–22 (MAKTKAGGSTKNGRDSAGRRLG) is disordered.

It belongs to the bacterial ribosomal protein bL27 family.

This is Large ribosomal subunit protein bL27 from Mesomycoplasma hyopneumoniae (strain 232) (Mycoplasma hyopneumoniae).